Reading from the N-terminus, the 347-residue chain is High mobility group protein 20A (347 aa).

Polar residues-rich tracts occupy residues 1-10 (MENLMTSSTL) and 40-49 (SGATSSTNNP). 2 disordered regions span residues 1 to 113 (MENL…YVRF) and 179 to 211 (FSRKTQDRQKGKSHRQDAARQATHDHEKETEVK). Residues 55–66 (LSQGQLLQSESS) are compositionally biased toward low complexity. Residues 72 to 82 (NEQRHEDEQRS) are compositionally biased toward basic and acidic residues. The segment covering 83–96 (KRGGWSKGRKRKKP) has biased composition (basic residues). The HMG box DNA-binding region spans 103 to 171 (PKSPLTGYVR…RYMKELEQYQ (69 aa)). Phosphoserine is present on serine 105. The segment covering 182–211 (KTQDRQKGKSHRQDAARQATHDHEKETEVK) has biased composition (basic and acidic residues). A coiled-coil region spans residues 229 to 273 (SKAREAELRQLRKSNMEFEERNAALQKHVESMRTAVEKLEVDVIQ).

As to quaternary structure, interacts with DTNB. Ubiquitous.

The protein localises to the nucleus. In terms of biological role, plays a role in neuronal differentiation as chromatin-associated protein. Acts as inhibitor of HMG20B. Overcomes the repressive effects of the neuronal silencer REST and induces the activation of neuronal-specific genes. Involved in the recruitment of the histone methyltransferase KMT2A/MLL1 and consequent increased methylation of histone H3 lysine 4. The chain is High mobility group protein 20A (HMG20A) from Homo sapiens (Human).